Here is a 193-residue protein sequence, read N- to C-terminus: Naphthalene 1,2-dioxygenase system, small oxygenase component (193 aa).

This sequence belongs to the bacterial ring-hydroxylating dioxygenase beta subunit family. In terms of assembly, the naphthalene dioxygenase (NDO) multicomponent enzyme system is composed of an electron transfer component and a dioxygenase component (iron sulfur protein (ISP)). The electron transfer component is composed of a ferredoxin reductase (NdoR) and a ferredoxin (NdoA), and the dioxygenase component is formed of a heterohexamer (trimer of heterodimers) of three large alpha subunits (NdoB) and three small beta subunits (NdoC).

Its pathway is aromatic compound metabolism; naphthalene degradation. In terms of biological role, component of the naphthalene dioxygenase (NDO) multicomponent enzyme system which catalyzes the incorporation of both atoms of molecular oxygen into naphthalene to form cis-(1R,2S)-dihydroxy-1,2-dihydronaphthalene. The beta subunit seems to have a structural role in the holoenzyme. The chain is Naphthalene 1,2-dioxygenase system, small oxygenase component from Pseudomonas aeruginosa.